The primary structure comprises 95 residues: ESAT-6-like protein EsxC (95 aa).

It belongs to the WXG100 family. ESAT-6 subfamily.

The protein localises to the secreted. The sequence is that of ESAT-6-like protein EsxC from Mycolicibacterium paratuberculosis (strain ATCC BAA-968 / K-10) (Mycobacterium paratuberculosis).